Here is a 125-residue protein sequence, read N- to C-terminus: NADPH-dependent 7-cyano-7-deazaguanine reductase (125 aa).

Residue cysteine 41 is the Thioimide intermediate of the active site. The active-site Proton donor is the aspartate 48. Substrate contacts are provided by residues 63–65 (VEL) and 82–83 (HE).

Belongs to the GTP cyclohydrolase I family. QueF type 1 subfamily.

The protein resides in the cytoplasm. It catalyses the reaction 7-aminomethyl-7-carbaguanine + 2 NADP(+) = 7-cyano-7-deazaguanine + 2 NADPH + 3 H(+). It participates in tRNA modification; tRNA-queuosine biosynthesis. Its function is as follows. Catalyzes the NADPH-dependent reduction of 7-cyano-7-deazaguanine (preQ0) to 7-aminomethyl-7-deazaguanine (preQ1). In Sulfurimonas denitrificans (strain ATCC 33889 / DSM 1251) (Thiomicrospira denitrificans (strain ATCC 33889 / DSM 1251)), this protein is NADPH-dependent 7-cyano-7-deazaguanine reductase.